Consider the following 693-residue polypeptide: Transcription activator of gluconeogenesis BC1G_14637 (693 aa).

A compositionally biased stretch (acidic residues) spans 1–12; the sequence is MSGETEIDDPEV. A disordered region spans residues 1-75; it reads MSGETEIDDP…KFDPKDPLRP (75 aa). Basic and acidic residues predominate over residues 21–49; the sequence is YSDHEQELDVIGKEGDNQEMAEQKVRPDG. A compositionally biased stretch (polar residues) spans 52-62; sequence NGNTVGATATV. Basic and acidic residues predominate over residues 65-74; it reads PKFDPKDPLR. A DNA-binding region (zn(2)-C6 fungal-type) is located at residues 84 to 112; that stretch reads CFACQRAHLTCGDERPCQRCIKRGLADAC. 2 stretches are compositionally biased toward polar residues: residues 144–155 and 275–287; these read SSNRATAASTPT and SAET…SAGM. 4 disordered regions span residues 144–170, 273–299, 350–413, and 531–567; these read SSNR…QPDT, SGSA…FSNN, TSGS…RNRD, and NLNT…DSNP. The span at 356–367 shows a compositional bias: low complexity; sequence SPSTDASPAAST. A compositionally biased stretch (polar residues) spans 369–379; the sequence is GFESSPTTTNY. Positions 394–408 are enriched in low complexity; sequence KSGPSGKLGPSGILG.

The protein belongs to the ERT1/acuK family.

The protein localises to the nucleus. In terms of biological role, transcription factor which regulates nonfermentable carbon utilization. Activator of gluconeogenetic genes. The sequence is that of Transcription activator of gluconeogenesis BC1G_14637 from Botryotinia fuckeliana (strain B05.10) (Noble rot fungus).